We begin with the raw amino-acid sequence, 247 residues long: MVIKSVGIESDKNSDTNERLINYNIEKPQVTQNVSNQLILTTLNDLYNWARLSSLWPLLYGTSCCFIEFACLLGSRFDFDRFGLVPRCSPRQADLIITAGTVTMKMAPSLVRLYEQMPEPKYVIAMGACTITGGMFSTDSYSTVRGVDKLIPVDVYLPGCPPKPEAIIDAVIKLRKKVAQENLVERGKLAQTHRYHSIKHELTLSSPVYTGKYLNSSARQTPPRSLSEATGVPVNLIFEMTKKNAIK.

[4Fe-4S] cluster is bound by residues C64, C65, C129, and C160.

It belongs to the complex I 20 kDa subunit family. As to quaternary structure, NDH is composed of at least 16 different subunits, 5 of which are encoded in the nucleus. Requires [4Fe-4S] cluster as cofactor.

Its subcellular location is the plastid. The protein localises to the chloroplast thylakoid membrane. The catalysed reaction is a plastoquinone + NADH + (n+1) H(+)(in) = a plastoquinol + NAD(+) + n H(+)(out). It catalyses the reaction a plastoquinone + NADPH + (n+1) H(+)(in) = a plastoquinol + NADP(+) + n H(+)(out). In terms of biological role, NDH shuttles electrons from NAD(P)H:plastoquinone, via FMN and iron-sulfur (Fe-S) centers, to quinones in the photosynthetic chain and possibly in a chloroplast respiratory chain. The immediate electron acceptor for the enzyme in this species is believed to be plastoquinone. Couples the redox reaction to proton translocation, and thus conserves the redox energy in a proton gradient. This Mesostigma viride (Green alga) protein is NAD(P)H-quinone oxidoreductase subunit K, chloroplastic.